The following is a 409-amino-acid chain: Glucose-1-phosphate adenylyltransferase (409 aa).

Alpha-D-glucose 1-phosphate contacts are provided by residues glycine 168, 183 to 184 (EK), and serine 201.

This sequence belongs to the bacterial/plant glucose-1-phosphate adenylyltransferase family. As to quaternary structure, homotetramer.

The enzyme catalyses alpha-D-glucose 1-phosphate + ATP + H(+) = ADP-alpha-D-glucose + diphosphate. The protein operates within glycan biosynthesis; glycogen biosynthesis. Its function is as follows. Involved in the biosynthesis of ADP-glucose, a building block required for the elongation reactions to produce glycogen. Catalyzes the reaction between ATP and alpha-D-glucose 1-phosphate (G1P) to produce pyrophosphate and ADP-Glc. This Corynebacterium efficiens (strain DSM 44549 / YS-314 / AJ 12310 / JCM 11189 / NBRC 100395) protein is Glucose-1-phosphate adenylyltransferase.